A 315-amino-acid polypeptide reads, in one-letter code: Calumenin (315 aa).

Positions 1–19 (MDLRQFLMCLSLCTAFALS) are cleaved as a signal peptide. At serine 44 the chain carries Phosphoserine. Residue tyrosine 47 is modified to Phosphotyrosine. At threonine 65 the chain carries Phosphothreonine. 6 EF-hand domains span residues 68–103 (ESKE…AQKK), 104–139 (YIYD…TYLD), 151–186 (QMMV…EEYD), 188–223 (MKDI…HDGN), 229–264 (WVKT…SDYD), and 265–300 (HAEA…FVGS). Phosphoserine is present on serine 69. Positions 81, 83, 85, 92, 117, 119, 121, and 128 each coordinate Ca(2+). N-linked (GlcNAc...) asparagine glycosylation occurs at asparagine 131. Aspartate 164 contacts Ca(2+). Lysine 165 bears the N6-acetyllysine mark. 12 residues coordinate Ca(2+): aspartate 166, aspartate 168, glutamate 175, aspartate 201, asparagine 203, aspartate 205, glutamate 212, aspartate 242, asparagine 244, aspartate 246, lysine 248, and glutamate 253. Threonine 254 is subject to Phosphothreonine. Phosphoserine is present on residues serine 261 and serine 277. Ca(2+) contacts are provided by aspartate 278, asparagine 280, aspartate 282, lysine 284, and glutamate 289. The short motif at 312 to 315 (HDEF) is the Prevents secretion from ER element.

It belongs to the CREC family. As to quaternary structure, interacts with GGCX.

It is found in the endoplasmic reticulum membrane. Its subcellular location is the golgi apparatus. It localises to the secreted. The protein resides in the melanosome. The protein localises to the sarcoplasmic reticulum lumen. Functionally, involved in regulation of vitamin K-dependent carboxylation of multiple N-terminal glutamate residues. Seems to inhibit gamma-carboxylase GGCX. Binds 7 calcium ions with a low affinity. The protein is Calumenin (CALU) of Bos taurus (Bovine).